We begin with the raw amino-acid sequence, 623 residues long: Serine/threonine-protein kinase ArnS (623 aa).

The next 2 membrane-spanning stretches (helical) occupy residues 13-33 and 49-69; these read MILI…GIVL and VYLI…QSLI. Positions 317–623 constitute a Protein kinase domain; that stretch reads YRVIEVIGLG…SYDIVKILEG (307 aa). ATP-binding positions include 323–331 and Lys344; that span reads IGLGGNGYV. The Proton acceptor role is filled by Asp460.

This sequence belongs to the protein kinase superfamily. Ser/Thr protein kinase family. Autophosphorylated.

Its subcellular location is the cell membrane. The catalysed reaction is L-seryl-[protein] + ATP = O-phospho-L-seryl-[protein] + ADP + H(+). The enzyme catalyses L-threonyl-[protein] + ATP = O-phospho-L-threonyl-[protein] + ADP + H(+). With respect to regulation, autophosphorylation is stimulated by Mn(2+). Its function is as follows. Plays an essential role in the controlled expression of archaellum components during starvation-induced motility. May inhibit arnR transcription and promote ArnR translation. In Sulfolobus acidocaldarius (strain ATCC 33909 / DSM 639 / JCM 8929 / NBRC 15157 / NCIMB 11770), this protein is Serine/threonine-protein kinase ArnS.